A 676-amino-acid chain; its full sequence is UvrABC system protein B (676 aa).

The Helicase ATP-binding domain occupies 26 to 414 (EGLDAGLAHQ…SAGEIADQVV (389 aa)). 39 to 46 (GVTGSGKT) lines the ATP pocket. A Beta-hairpin motif is present at residues 92 to 115 (YYDYYQPEAYVPTTDTFIEKDSSV). The 167-residue stretch at 432–598 (QVDDLLSEIR…ALKRNIKDIM (167 aa)) folds into the Helicase C-terminal domain. A UVR domain is found at 636 to 671 (EKEITKLEAQMYKHAQDLEFELAAQKRDEIEKLRQQ).

Belongs to the UvrB family. As to quaternary structure, forms a heterotetramer with UvrA during the search for lesions. Interacts with UvrC in an incision complex.

The protein resides in the cytoplasm. The UvrABC repair system catalyzes the recognition and processing of DNA lesions. A damage recognition complex composed of 2 UvrA and 2 UvrB subunits scans DNA for abnormalities. Upon binding of the UvrA(2)B(2) complex to a putative damaged site, the DNA wraps around one UvrB monomer. DNA wrap is dependent on ATP binding by UvrB and probably causes local melting of the DNA helix, facilitating insertion of UvrB beta-hairpin between the DNA strands. Then UvrB probes one DNA strand for the presence of a lesion. If a lesion is found the UvrA subunits dissociate and the UvrB-DNA preincision complex is formed. This complex is subsequently bound by UvrC and the second UvrB is released. If no lesion is found, the DNA wraps around the other UvrB subunit that will check the other stand for damage. The protein is UvrABC system protein B of Vibrio vulnificus (strain CMCP6).